The sequence spans 181 residues: Acireductone dioxygenase (181 aa).

Fe(2+)-binding residues include His97, His99, Glu103, and His141. His97, His99, Glu103, and His141 together coordinate Ni(2+).

The protein belongs to the acireductone dioxygenase (ARD) family. In terms of assembly, monomer. The cofactor is Fe(2+). It depends on Ni(2+) as a cofactor.

It carries out the reaction 1,2-dihydroxy-5-(methylsulfanyl)pent-1-en-3-one + O2 = 3-(methylsulfanyl)propanoate + CO + formate + 2 H(+). The enzyme catalyses 1,2-dihydroxy-5-(methylsulfanyl)pent-1-en-3-one + O2 = 4-methylsulfanyl-2-oxobutanoate + formate + 2 H(+). The protein operates within amino-acid biosynthesis; L-methionine biosynthesis via salvage pathway; L-methionine from S-methyl-5-thio-alpha-D-ribose 1-phosphate: step 5/6. In terms of biological role, catalyzes 2 different reactions between oxygen and the acireductone 1,2-dihydroxy-3-keto-5-methylthiopentene (DHK-MTPene) depending upon the metal bound in the active site. Fe-containing acireductone dioxygenase (Fe-ARD) produces formate and 2-keto-4-methylthiobutyrate (KMTB), the alpha-ketoacid precursor of methionine in the methionine recycle pathway. Ni-containing acireductone dioxygenase (Ni-ARD) produces methylthiopropionate, carbon monoxide and formate, and does not lie on the methionine recycle pathway. The polypeptide is Acireductone dioxygenase (Pseudomonas aeruginosa (strain UCBPP-PA14)).